Reading from the N-terminus, the 288-residue chain is UPF0761 membrane protein HS_0693 (288 aa).

Helical transmembrane passes span 36 to 56, 92 to 112, 127 to 147, 176 to 196, 200 to 220, and 240 to 260; these read TLALVPLIMVFFSVFAAFPVF, QMSAVGIISLIVVALMLIHSI, PAIFSFAIYWLILTLGPIVIA, LLSLMPFFLTWFIFTVLYMVV, KVSIIHSAAGALIAAVFFTLG, and AMATLPIMLLWIQLSWTAVLL.

The protein belongs to the UPF0761 family.

Its subcellular location is the cell inner membrane. The sequence is that of UPF0761 membrane protein HS_0693 from Histophilus somni (strain 129Pt) (Haemophilus somnus).